A 73-amino-acid polypeptide reads, in one-letter code: Large ribosomal subunit protein bL31 (73 aa).

Positions 16, 18, 38, and 41 each coordinate Zn(2+).

Belongs to the bacterial ribosomal protein bL31 family. Type A subfamily. In terms of assembly, part of the 50S ribosomal subunit. The cofactor is Zn(2+).

Functionally, binds the 23S rRNA. The polypeptide is Large ribosomal subunit protein bL31 (Vibrio vulnificus (strain CMCP6)).